Consider the following 516-residue polypeptide: GMP synthase [glutamine-hydrolyzing] (516 aa).

In terms of domain architecture, Glutamine amidotransferase type-1 spans 5 to 199 (SIIVLDFGSQ…ARNICGVTEK (195 aa)). The Nucleophile role is filled by Cys-82. Catalysis depends on residues His-173 and Glu-175. The GMPS ATP-PPase domain occupies 200–391 (WKMEHFLKEQ…LGLPESMINR (192 aa)). Position 227–233 (227–233 (SGGVDSS)) interacts with ATP.

In terms of assembly, homodimer.

The catalysed reaction is XMP + L-glutamine + ATP + H2O = GMP + L-glutamate + AMP + diphosphate + 2 H(+). It participates in purine metabolism; GMP biosynthesis; GMP from XMP (L-Gln route): step 1/1. In terms of biological role, catalyzes the synthesis of GMP from XMP. In Sulfurimonas denitrificans (strain ATCC 33889 / DSM 1251) (Thiomicrospira denitrificans (strain ATCC 33889 / DSM 1251)), this protein is GMP synthase [glutamine-hydrolyzing].